The chain runs to 395 residues: Xylose isomerase (395 aa).

Residues H54 and D57 contribute to the active site. Positions 181, 217, 220, 245, 255, 257, and 293 each coordinate Mg(2+).

This sequence belongs to the xylose isomerase family. As to quaternary structure, homotetramer. The cofactor is Mg(2+).

It is found in the cytoplasm. The catalysed reaction is alpha-D-xylose = alpha-D-xylulofuranose. The sequence is that of Xylose isomerase from Pseudarthrobacter chlorophenolicus (strain ATCC 700700 / DSM 12829 / CIP 107037 / JCM 12360 / KCTC 9906 / NCIMB 13794 / A6) (Arthrobacter chlorophenolicus).